A 142-amino-acid chain; its full sequence is Large ribosomal subunit protein uL11 (142 aa).

The protein belongs to the universal ribosomal protein uL11 family. As to quaternary structure, part of the ribosomal stalk of the 50S ribosomal subunit. Interacts with L10 and the large rRNA to form the base of the stalk. L10 forms an elongated spine to which L12 dimers bind in a sequential fashion forming a multimeric L10(L12)X complex. In terms of processing, one or more lysine residues are methylated.

In terms of biological role, forms part of the ribosomal stalk which helps the ribosome interact with GTP-bound translation factors. The protein is Large ribosomal subunit protein uL11 of Acinetobacter baumannii (strain AB307-0294).